The chain runs to 131 residues: Glycine cleavage system H protein (131 aa).

The Lipoyl-binding domain occupies 24–106 (TVRVGITDYA…YGEGWLVELQ (83 aa)). The residue at position 65 (lysine 65) is an N6-lipoyllysine.

The protein belongs to the GcvH family. In terms of assembly, the glycine cleavage system is composed of four proteins: P, T, L and H. (R)-lipoate is required as a cofactor.

The glycine cleavage system catalyzes the degradation of glycine. The H protein shuttles the methylamine group of glycine from the P protein to the T protein. The protein is Glycine cleavage system H protein of Mycolicibacterium gilvum (strain PYR-GCK) (Mycobacterium gilvum (strain PYR-GCK)).